We begin with the raw amino-acid sequence, 100 residues long: Urease subunit gamma (100 aa).

This sequence belongs to the urease gamma subunit family. Heterotrimer of UreA (gamma), UreB (beta) and UreC (alpha) subunits. Three heterotrimers associate to form the active enzyme.

Its subcellular location is the cytoplasm. The enzyme catalyses urea + 2 H2O + H(+) = hydrogencarbonate + 2 NH4(+). It functions in the pathway nitrogen metabolism; urea degradation; CO(2) and NH(3) from urea (urease route): step 1/1. The sequence is that of Urease subunit gamma from Bacillus cereus (strain ATCC 10987 / NRS 248).